Here is a 1358-residue protein sequence, read N- to C-terminus: MGNQLAGIAPSQILSVESYFSDIHDFEYDKSLGSTRFFKVARAKHREGLVVVKVFAIQDPTLPLTSYKQELEELKIRLNSAQNCLPFQKASEKASEKAAMLFRQYVRDNLYDRISTRPFLNNIEKRWIAFQILTAVDQAHKSGVRHGDIKTENVMVTSWNWVLLTDFASFKPTYLPEDNPADFNYFFDTSRRRTCYIAPERFVDGGMFATELEYMRDPSTPLVDLNSNQRTRGELKRAMDIFSAGCVIAELFTEGVPLFDLSQLLAYRNGHFFPEQVLNKIEDHSIRELVTQMIHREPDKRLEAEDYLKQQRGNAFPEIFYTFLQPYMAQFAKETFLSADERILVIRKDLGNIIHNLCGHDLPEKAEGEPKENGLVILVSVITSCLQTLKYCDSKLAALELILHLAPRLSVEILLDRITPYLLHFSNDSVPRVRAEALRTLTKVLALVKEVPRNDINIYPEYILPGIAHLAQDDATIVRLAYAENIALLAETALRFLELVQLKNLNMENDPNNEEIDEVTHPNGNYDTELQALHEMVQQKVVTLLSDPENIVKQTLMENGITRLCVFFGRQKANDVLLSHMITFLNDKNDWHLRGAFFDSIVGVAAYVGWQSSSILKPLLQQGLSDAEEFVIVKALYALTCMCQLGLLQKPHVYEFASDIAPFLCHPNLWIRYGAVGFITVVARQISTADVYCKLMPYLDPYITQPIIQIERKLVLLSVLKEPVSRSIFDYALRSKDITSLFRHLHMRQKKRNGSLPDCPPPEDPAIAQLLKKLLSQGMTEEEEDKLLALKDFMMKSNKAKANIVDQSHLHDSSQKGVIDLAALGITGRQVDLVKTKQEPDDKRARKHVKQDSNVNEEWKSMFGSLDPPNMPQALPKGSDQEVIQTGKPPRSESSAGICVPLSTSSQVPEVTTVQNKKPVIPVLSSTILPSTYQIRITTCKTELQQLIQQKREQCNAERIAKQMMENAEWESKPPPPGWRPKGLLVAHLHEHKSAVNRIRVSDEHSLFATCSNDGTVKIWNSQKMEGKTTTTRSILTYSRIGGRVKTLTFCQGSHYLAIASDNGAVQLLGIEASKLPKSPKIHPLQSRILDQKEDGCVVDMHHFNSGAQSVLAYATVNGSLVGWDLRSSSNAWTLKHDLKSGLITSFAVDIHQCWLCIGTSSGTMACWDMRFQLPISSHCHPSRARIRRLSMHPLYQSWVIAAVQGNNEVSMWDMETGDRRFTLWASSAPPLSELQPSPHSVHGIYCSPADGNPILLTAGSDMKIRFWDLAYPERSYVVAGSTSSPSVSYYRKIIEGTEVVQEIQNKQKVGPSDDTPRRGPESLPVGHHDIITDVATFQTTQGFIVTASRDGIVKVWK.

A lipid anchor (N-myristoyl glycine) is attached at G2. Positions 26-324 (FEYDKSLGST…AFPEIFYTFL (299 aa)) constitute a Protein kinase domain. Residues 32 to 40 (LGSTRFFKV) and K53 each bind ATP. D148 serves as the catalytic Proton acceptor. 3 HEAT repeats span residues 413 to 450 (ILLD…LVKE), 458 to 495 (IYPE…TALR), and 572 to 610 (KAND…YVGW). 4 positions are modified to phosphoserine: S808, S813, S853, and S865. The tract at residues 875–898 (LPKGSDQEVIQTGKPPRSESSAGI) is disordered. WD repeat units lie at residues 991–1030 (EHKS…GKTT), 1040–1079 (RIGG…LPKS), 1093–1134 (KEDG…NAWT), 1139–1178 (LKSG…PISS), 1182–1223 (PSRA…RRFT), and 1237–1278 (PSPH…RSYV). The disordered stretch occupies residues 1307-1326 (KQKVGPSDDTPRRGPESLPV). Positions 1315–1326 (DTPRRGPESLPV) are enriched in basic and acidic residues. Residue T1316 is modified to Phosphothreonine. A WD 7 repeat occupies 1327-1358 (GHHDIITDVATFQTTQGFIVTASRDGIVKVWK).

Belongs to the protein kinase superfamily. Ser/Thr protein kinase family. As to quaternary structure, component of the PI3K (PI3KC3/PI3K-III/class III phosphatidylinositol 3-kinase) complex the core of which is composed of the catalytic subunit PIK3C3, the regulatory subunit PIK3R4 and BECN1 associating with additional regulatory/auxiliary subunits to form alternative complex forms. Alternative complex forms containing a fourth regulatory subunit in a mutually exclusive manner are PI3K complex I (PI3KC3-C1) containing ATG14, and PI3K complex II (PI3KC3-C2) containing UVRAG. PI3KC3-C1 displays a V-shaped architecture with PIK3R4 serving as a bridge between PIK3C3 and the ATG14:BECN1 subcomplex. Both, PI3KC3-C1 and PI3KC3-C2, can associate with further regulatory subunits, such as RUBCN, SH3GLB1/Bif-1, AMBRA1 and NRBF2. PI3KC3-C1 probably associates with PIK3CB. Interacts with RAB7A in the presence of PIK3C3/VPS34. Interacts with NRBF2. Interacts with ARMC3. It depends on Mn(2+) as a cofactor. In terms of processing, myristoylated. Post-translationally, probably autophosphorylated. Ubiquitously expressed.

Its subcellular location is the late endosome. The protein resides in the cytoplasmic vesicle. The protein localises to the autophagosome. It is found in the membrane. It carries out the reaction L-seryl-[protein] + ATP = O-phospho-L-seryl-[protein] + ADP + H(+). The enzyme catalyses L-threonyl-[protein] + ATP = O-phospho-L-threonyl-[protein] + ADP + H(+). Functionally, regulatory subunit of the PI3K complex that mediates formation of phosphatidylinositol 3-phosphate; different complex forms are believed to play a role in multiple membrane trafficking pathways: PI3KC3-C1 is involved in initiation of autophagosomes and PI3KC3-C2 in maturation of autophagosomes and endocytosis. Involved in regulation of degradative endocytic trafficking and cytokinesis, probably in the context of PI3KC3-C2. This chain is Phosphoinositide 3-kinase regulatory subunit 4 (PIK3R4), found in Homo sapiens (Human).